Consider the following 260-residue polypeptide: Putative ATP-binding protein BAB2_1147 (260 aa).

Residues 5–228 (ISFNNVVMRY…DLPYPRTEAI (224 aa)) enclose the ABC transporter domain. 37–44 (GPSGCGKS) provides a ligand contact to ATP.

The protein belongs to the ABC transporter superfamily. The complex is composed of two ATP-binding proteins (BAB2_1147), two transmembrane proteins (BAB2_1148) and a solute-binding protein (BAB2_1146).

The protein resides in the cell inner membrane. Functionally, probably part of an ABC transporter complex. Probably Responsible for energy coupling to the transport system. In Brucella abortus (strain 2308), this protein is Putative ATP-binding protein BAB2_1147.